Here is a 659-residue protein sequence, read N- to C-terminus: A-type ATP synthase subunit I (659 aa).

Transmembrane regions (helical) follow at residues 376 to 396 (FFFGFMLTDFVYGLLLGIISA), 415 to 435 (IMLWSSVFTMTLGILFGSYCG), 460 to 480 (MIALAIGLAHLFTGYLLGFIV), 489 to 509 (GAIFEQLSWLLIIIGITLFAL), 518 to 538 (LIVKGIFGIGLILFMIGEVLA), 542 to 562 (MAVLLVISDFFGFVGNWLSYA), 568 to 588 (ALATSGIALVINILVEMIWGI), and 590 to 610 (IASVPLGALIGILVLIGGHIF).

Belongs to the V-ATPase 116 kDa subunit family. Has multiple subunits with at least A(3), B(3), C, D, E, F, H, I and proteolipid K(x).

Its subcellular location is the cell membrane. Functionally, component of the A-type ATP synthase that produces ATP from ADP in the presence of a proton gradient across the membrane. This is A-type ATP synthase subunit I from Pyrococcus horikoshii (strain ATCC 700860 / DSM 12428 / JCM 9974 / NBRC 100139 / OT-3).